The sequence spans 417 residues: Ig-like V-type domain-containing protein FAM187A (417 aa).

Residues 1 to 18 (MSLAHTTVLLWAWGSLQA) form the signal peptide. Over 19–377 (FEIVEKESVF…ASLSDPETRT (359 aa)) the chain is Extracellular. Residues Asn248 and Asn318 are each glycosylated (N-linked (GlcNAc...) asparagine). Residues 268-362 (PWVPQVPIQF…IAGFRLGVIT (95 aa)) form the Ig-like V-type domain. A disulfide bond links Cys290 and Cys346. Residues 378–398 (AIELTLMGYLLITIFFITIHL) traverse the membrane as a helical segment. Residues 399-417 (CRCCCQSRCCPNFSAQTLL) lie on the Cytoplasmic side of the membrane.

Belongs to the FAM187 family.

The protein localises to the membrane. The protein is Ig-like V-type domain-containing protein FAM187A (Fam187a) of Mus musculus (Mouse).